We begin with the raw amino-acid sequence, 530 residues long: Phosphoenolpyruvate carboxykinase (ATP) (530 aa).

Substrate is bound by residues Arg-57, Tyr-193, and Lys-199. Residues Lys-199, His-218, and 234–242 each bind ATP; that span reads GLSGTGKTT. Lys-199 and His-218 together coordinate Mn(2+). Asp-255 contributes to the Mn(2+) binding site. ATP contacts are provided by Glu-283, Arg-320, and Thr-445. A substrate-binding site is contributed by Arg-320.

This sequence belongs to the phosphoenolpyruvate carboxykinase (ATP) family. It depends on Mn(2+) as a cofactor.

Its subcellular location is the cytoplasm. It carries out the reaction oxaloacetate + ATP = phosphoenolpyruvate + ADP + CO2. It functions in the pathway carbohydrate biosynthesis; gluconeogenesis. Involved in the gluconeogenesis. Catalyzes the conversion of oxaloacetate (OAA) to phosphoenolpyruvate (PEP) through direct phosphoryl transfer between the nucleoside triphosphate and OAA. The protein is Phosphoenolpyruvate carboxykinase (ATP) of Leptospira biflexa serovar Patoc (strain Patoc 1 / Ames).